The chain runs to 58 residues: VAIAENSVVGGTCVIRGCVPKLTLTGDDTEPLIVDALLCATGRTTQSNIFAVGDCTDR.

FAD-binding residues include glutamate 5, threonine 12, cysteine 13, and lysine 21. An intrachain disulfide couples cysteine 13 to cysteine 18.

It belongs to the class-I pyridine nucleotide-disulfide oxidoreductase family. In terms of assembly, homodimer. The cofactor is FAD.

It is found in the cytoplasm. The catalysed reaction is 2 glutathione + NADP(+) = glutathione disulfide + NADPH + H(+). Its function is as follows. Catalyzes the reduction of glutathione disulfide (GSSG) to reduced glutathione (GSH). Constitutes the major mechanism to maintain a high GSH:GSSG ratio in the cytosol. This Spirulina sp protein is Glutathione reductase.